Consider the following 196-residue polypeptide: GTP cyclohydrolase 1 (196 aa).

Cys-86, His-89, and Cys-158 together coordinate Zn(2+).

The protein belongs to the GTP cyclohydrolase I family. In terms of assembly, homomer.

The catalysed reaction is GTP + H2O = 7,8-dihydroneopterin 3'-triphosphate + formate + H(+). It functions in the pathway cofactor biosynthesis; 7,8-dihydroneopterin triphosphate biosynthesis; 7,8-dihydroneopterin triphosphate from GTP: step 1/1. The protein is GTP cyclohydrolase 1 of Clostridium botulinum (strain Kyoto / Type A2).